Consider the following 400-residue polypeptide: WD repeat and FYVE domain-containing protein 2 (400 aa).

6 WD repeats span residues 22–61 (GSQE…QYWP), 66–105 (AMPS…NKMT), 112–150 (AHQS…QRLG), 153–192 (RTSA…CTLV), 197–236 (GHTG…GTAI), and 240–279 (GHND…QETP). The segment at 281 to 352 (WLDSDSCQKC…VCDSCHEAIT (72 aa)) adopts an FYVE-type zinc-finger fold. 8 residues coordinate Zn(2+): cysteine 287, cysteine 290, cysteine 314, cysteine 317, cysteine 322, cysteine 325, cysteine 344, and cysteine 347. The WD 7 repeat unit spans residues 364–399 (DSKHNIVHVHFDATRGWLLTSGTDKVIKLWDMTPVV).

As to quaternary structure, homodimer. Interacts (via WD repeats 1-3) with AKT1, AKT2, PRKCZ and PRKCI. Interacts with VAMP2. Forms a complex with VAMP2 and PRKCZ. Interacts with FOXO1. Forms a complex with AKT1 and FOXO1.

It is found in the endosome. Its subcellular location is the early endosome. The protein resides in the cytoplasm. Functionally, acts in an adapter protein-like fashion to mediate the interaction between the kinase PRKCZ and its substrate VAMP2 and increases the PRKCZ-dependent phosphorylation of VAMP2. Positively regulates adipocyte differentiation, by facilitating the phosphorylation and thus inactivation of the anti-adipogenetic transcription factor FOXO1 by the kinase AKT1. Plays a role in endosomal control of AKT2 signaling; required for insulin-stimulated AKT2 phosphorylation and glucose uptake and insulin-stimulated phosphorylation of AKT2 substrates. Participates in transferrin receptor endocytosis. The polypeptide is WD repeat and FYVE domain-containing protein 2 (WDFY2) (Homo sapiens (Human)).